We begin with the raw amino-acid sequence, 229 residues long: Uracil-DNA glycosylase (229 aa).

Asp65 serves as the catalytic Proton acceptor.

Belongs to the uracil-DNA glycosylase (UDG) superfamily. UNG family.

Its subcellular location is the cytoplasm. It carries out the reaction Hydrolyzes single-stranded DNA or mismatched double-stranded DNA and polynucleotides, releasing free uracil.. Excises uracil residues from the DNA which can arise as a result of misincorporation of dUMP residues by DNA polymerase or due to deamination of cytosine. The polypeptide is Uracil-DNA glycosylase (Limosilactobacillus fermentum (strain NBRC 3956 / LMG 18251) (Lactobacillus fermentum)).